The primary structure comprises 392 residues: Tryptophan synthase beta chain (392 aa).

Residue lysine 86 is modified to N6-(pyridoxal phosphate)lysine.

The protein belongs to the TrpB family. Tetramer of two alpha and two beta chains. Pyridoxal 5'-phosphate serves as cofactor.

The catalysed reaction is (1S,2R)-1-C-(indol-3-yl)glycerol 3-phosphate + L-serine = D-glyceraldehyde 3-phosphate + L-tryptophan + H2O. It participates in amino-acid biosynthesis; L-tryptophan biosynthesis; L-tryptophan from chorismate: step 5/5. The beta subunit is responsible for the synthesis of L-tryptophan from indole and L-serine. The polypeptide is Tryptophan synthase beta chain (trpB) (Buchnera aphidicola subsp. Melaphis rhois).